Here is a 995-residue protein sequence, read N- to C-terminus: Protein translocase subunit SecA (995 aa).

Residues Gln86, 104-108 (GEGKT), and Asp535 each bind ATP. Residues 883-911 (AQTVSSDGNGEVVRKPQRRSTPQIGRNEL) form a disordered region. The Zn(2+) site is built by Cys912, Cys914, Cys923, and His924. A disordered region spans residues 939–995 (PSAPPASKALKSTPATQTAVAEEAAKIQAAINSGKLPPTQTTPRGRQAPSVPRGKKR). Low complexity predominate over residues 957 to 969 (AVAEEAAKIQAAI).

It belongs to the SecA family. As to quaternary structure, monomer and homodimer. Part of the essential Sec protein translocation apparatus which comprises SecA, SecYEG and auxiliary proteins SecDF. Other proteins may also be involved. It depends on Zn(2+) as a cofactor.

It is found in the cell membrane. The protein localises to the cytoplasm. It catalyses the reaction ATP + H2O + cellular proteinSide 1 = ADP + phosphate + cellular proteinSide 2.. Its function is as follows. Part of the Sec protein translocase complex. Interacts with the SecYEG preprotein conducting channel. Has a central role in coupling the hydrolysis of ATP to the transfer of proteins into and across the cell membrane, serving as an ATP-driven molecular motor driving the stepwise translocation of polypeptide chains across the membrane. The polypeptide is Protein translocase subunit SecA (Chloroflexus aurantiacus (strain ATCC 29366 / DSM 635 / J-10-fl)).